Reading from the N-terminus, the 976-residue chain is Peptidylglycine alpha-amidating monooxygenase (976 aa).

An N-terminal signal peptide occupies residues 1–25; it reads MAGRARSGLLLLLLGLLALQSSCLA. The peptidylglycine alpha-hydroxylating monooxygenase stretch occupies residues 1 to 497; the sequence is MAGRARSGLL…EGPWEPEPSG (497 aa). The propeptide occupies 26-35; the sequence is FRSPLSVFKR. The Intragranular segment spans residues 36–866; sequence FKETTRSFSN…QKLSTEPGSG (831 aa). 5 cysteine pairs are disulfide-bonded: Cys47-Cys186, Cys81-Cys126, Cys114-Cys131, Cys227-Cys334, and Cys293-Cys315. Cu(2+) contacts are provided by His107 and His108. Cu(2+) is bound by residues His172, His242, His244, and Met314. Residues 498–820 form a peptidyl-alpha-hydroxyglycine alpha-amidating lyase region; it reads DFHVEEELDW…LTEKMEHRSV (323 aa). 4 NHL repeats span residues 501–544, 570–611, 620–665, and 673–717; these read VEEE…NSFD, AEIL…LDPH, LGRS…FSPS, and GEES…FKTD. Val520 is a binding site for Ca(2+). Arg533 is an a protein binding site. His585 lines the Zn(2+) pocket. Leu587 serves as a coordination point for Ca(2+). Residues Cys634 and Cys655 are joined by a disulfide bond. Residue Tyr654 coordinates a protein. Residue His690 coordinates Zn(2+). A disulfide bridge connects residues Cys702 and Cys713. A protein is bound at residue Arg706. The N-linked (GlcNAc...) asparagine glycan is linked to Asn765. Residues 769–812 form an NHL 5 repeat; sequence GEIIDVFKPVRKHFDMPHDIVASEDGTVYIGDAHTNTVWKFTLT. Val774 bears the Sulfotyrosine mark. Residue His786 coordinates Zn(2+). Asp787 contributes to the Ca(2+) binding site. Glu792 is modified (sulfotyrosine). The helical transmembrane segment at 867 to 890 threads the bilayer; the sequence is VSVVLITTLLVIPVLVLLAIVMFI. The Cytoplasmic portion of the chain corresponds to 891-976; it reads RWKKSRAFGD…APLPKPAPSS (86 aa). Ser921, Ser932, and Ser945 each carry phosphoserine. Residues 928–945 are interaction with RASSF9; it reads NFFASRKGYSRKGFDRVS. A disordered region spans residues 940–976; that stretch reads GFDRVSTEGSDQEKDEDDGTESEEEYSAPLPKPAPSS. A Phosphothreonine modification is found at Thr946. Position 949 is a phosphoserine (Ser949). Over residues 952 to 965 the composition is skewed to acidic residues; the sequence is EKDEDDGTESEEEY. Thr959 bears the Phosphothreonine mark. Ser961 is subject to Phosphoserine.

The protein in the C-terminal section; belongs to the peptidyl-alpha-hydroxyglycine alpha-amidating lyase family. In the N-terminal section; belongs to the copper type II ascorbate-dependent monooxygenase family. In terms of assembly, monomer. Interacts with RASSF9. Zn(2+) serves as cofactor. Requires Cu(2+) as cofactor.

It is found in the cytoplasmic vesicle. Its subcellular location is the secretory vesicle membrane. The protein resides in the membrane. The protein localises to the secreted. The enzyme catalyses a [peptide]-C-terminal glycine + 2 L-ascorbate + O2 = a [peptide]-C-terminal (2S)-2-hydroxyglycine + 2 monodehydro-L-ascorbate radical + H2O. It catalyses the reaction a [peptide]-C-terminal (2S)-2-hydroxyglycine = a [peptide]-C-terminal amide + glyoxylate. It carries out the reaction N-dodecanoylglycine + 2 L-ascorbate + O2 = N-dodecanoyl-(2S)-hydroxyglycine + 2 monodehydro-L-ascorbate radical + H2O. The catalysed reaction is N-dodecanoyl-(2S)-hydroxyglycine = dodecanamide + glyoxylate. The enzyme catalyses N-(9Z,12Z,15Z)-octadecatrienoylglycine + 2 L-ascorbate + O2 = N-(9Z,12Z,15Z)-octadecatrienoyl-(2S)-hydroxyglycine + 2 monodehydro-L-ascorbate radical + H2O. It catalyses the reaction N-(9Z,12Z,15Z)-octadecatrienoyl-(2S)-hydroxyglycine = (9Z,12Z,15Z)-octadecatrienamide + glyoxylate. It carries out the reaction N-(9Z-octadecenoyl)glycine + 2 L-ascorbate + O2 = N-(9Z-octadecenoyl)-(2S)-hydroxyglycine + 2 monodehydro-L-ascorbate radical + H2O. The catalysed reaction is N-(9Z-octadecenoyl)-(2S)-hydroxyglycine = (9Z)-octadecenamide + glyoxylate. The enzyme catalyses N-tetradecanoylglycine + 2 L-ascorbate + O2 = N-tetradecanoyl-(2S)-hydroxyglycine + 2 monodehydro-L-ascorbate radical + H2O. It catalyses the reaction N-tetradecanoyl-(2S)-hydroxyglycine = tetradecamide + glyoxylate. It carries out the reaction N-decanoylglycine + 2 L-ascorbate + O2 = N-decanoyl-(2S)-hydroxyglycine + 2 monodehydro-L-ascorbate radical + H2O. The catalysed reaction is N-decanoyl-(2S)-hydroxyglycine = decanamide + glyoxylate. The enzyme catalyses N-octanoylglycine + 2 L-ascorbate + O2 = N-octanoyl-(2S)-hydroxyglycine + 2 monodehydro-L-ascorbate radical + H2O. It catalyses the reaction N-octanoyl-(2S)-hydroxyglycine = octanamide + glyoxylate. PAM activity is inhibited by EDTA, phenylglyoxal and diethyl pyrocarbonate. PAL activity is stimulated by cadmium and inhibited by mercury. Bifunctional enzyme that catalyzes amidation of the C-terminus of proteins. Alpha-amidation is present at the C-terminus of many endocrine hormones and neuropeptides and is required for their activity. C-terminal amidation also takes place in response to protein fragmentation triggered by oxidative stress, promoting degradation of amidated protein fragments by the proteasome. Alpha-amidation involves two sequential reactions, both of which are catalyzed by separate catalytic domains of the enzyme. The first step, catalyzed by peptidyl alpha-hydroxylating monooxygenase (PHM) domain, is the copper-, ascorbate-, and O2- dependent stereospecific hydroxylation (with S stereochemistry) at the alpha-carbon (C-alpha) of the C-terminal glycine of the peptidylglycine substrate. The second step, catalyzed by the peptidylglycine amidoglycolate lyase (PAL) domain, is the zinc-dependent cleavage of the N-C-alpha bond, producing the alpha-amidated peptide and glyoxylate. Similarly, catalyzes the two-step conversion of an N-fatty acylglycine to a primary fatty acid amide and glyoxylate. This Rattus norvegicus (Rat) protein is Peptidylglycine alpha-amidating monooxygenase.